The primary structure comprises 277 residues: Formamidopyrimidine-DNA glycosylase (277 aa).

Pro2 (schiff-base intermediate with DNA) is an active-site residue. Catalysis depends on Glu3, which acts as the Proton donor. Lys60 (proton donor; for beta-elimination activity) is an active-site residue. 3 residues coordinate DNA: His94, Arg113, and Arg156. Residues 241 to 275 form an FPG-type zinc finger; sequence KVYNREGLPCPHCGKPIQRIKVAGRSSYYCSSCQK. The Proton donor; for delta-elimination activity role is filled by Arg265.

It belongs to the FPG family. As to quaternary structure, monomer. Zn(2+) is required as a cofactor.

It carries out the reaction Hydrolysis of DNA containing ring-opened 7-methylguanine residues, releasing 2,6-diamino-4-hydroxy-5-(N-methyl)formamidopyrimidine.. It catalyses the reaction 2'-deoxyribonucleotide-(2'-deoxyribose 5'-phosphate)-2'-deoxyribonucleotide-DNA = a 3'-end 2'-deoxyribonucleotide-(2,3-dehydro-2,3-deoxyribose 5'-phosphate)-DNA + a 5'-end 5'-phospho-2'-deoxyribonucleoside-DNA + H(+). Its function is as follows. Involved in base excision repair of DNA damaged by oxidation or by mutagenic agents. Acts as a DNA glycosylase that recognizes and removes damaged bases. Has a preference for oxidized purines, such as 7,8-dihydro-8-oxoguanine (8-oxoG). Has AP (apurinic/apyrimidinic) lyase activity and introduces nicks in the DNA strand. Cleaves the DNA backbone by beta-delta elimination to generate a single-strand break at the site of the removed base with both 3'- and 5'-phosphates. In Desulforamulus reducens (strain ATCC BAA-1160 / DSM 100696 / MI-1) (Desulfotomaculum reducens), this protein is Formamidopyrimidine-DNA glycosylase.